A 96-amino-acid chain; its full sequence is Putative septation protein SpoVG (96 aa).

Belongs to the SpoVG family.

Could be involved in septation. The sequence is that of Putative septation protein SpoVG from Clostridium kluyveri (strain ATCC 8527 / DSM 555 / NBRC 12016 / NCIMB 10680 / K1).